Here is a 381-residue protein sequence, read N- to C-terminus: Bifunctional enzyme Fae/Hps (381 aa).

Residues 1-150 form a formaldehyde-activating enzyme region; sequence MIKFGEAVLG…KEKYRALHPL (150 aa). A 3-hexulose-6-phosphate synthase region spans residues 151-381; that stretch reads VGFRDVRLEY…DEDEDIGEEL (231 aa).

This sequence in the N-terminal section; belongs to the formaldehyde-activating enzyme family. It in the C-terminal section; belongs to the HPS/KGPDC family. HPS subfamily.

The enzyme catalyses 5,6,7,8-tetrahydromethanopterin + formaldehyde = 5,10-methylenetetrahydromethanopterin + H2O. It carries out the reaction D-ribulose 5-phosphate + formaldehyde = D-arabino-hex-3-ulose 6-phosphate. Its pathway is carbohydrate biosynthesis; D-ribose 5-phosphate biosynthesis. Its function is as follows. Catalyzes the condensation of formaldehyde with tetrahydromethanopterin (H(4)MPT) to 5,10-methylenetetrahydromethanopterin. In terms of biological role, catalyzes the reversible formation of ribulose-5-phosphate and formaldehyde from 3-hexulose-6-phosphate. This chain is Bifunctional enzyme Fae/Hps, found in Methanocaldococcus jannaschii (strain ATCC 43067 / DSM 2661 / JAL-1 / JCM 10045 / NBRC 100440) (Methanococcus jannaschii).